Consider the following 319-residue polypeptide: ATP-dependent 6-phosphofructokinase (319 aa).

Gly-11 contacts ATP. ADP is bound at residue 21-25 (RAVTR). ATP is bound by residues 72–73 (RY) and 102–105 (GDGS). Position 103 (Asp-103) interacts with Mg(2+). 125-127 (TID) serves as a coordination point for substrate. Asp-127 (proton acceptor) is an active-site residue. Residue Arg-154 coordinates ADP. Substrate contacts are provided by residues Arg-162 and 169 to 171 (MGR). ADP-binding positions include 185-187 (GAD) and 213-215 (KDH). Substrate contacts are provided by residues Glu-222, Arg-243, and 249–252 (HMQR).

This sequence belongs to the phosphofructokinase type A (PFKA) family. ATP-dependent PFK group I subfamily. Prokaryotic clade 'B1' sub-subfamily. Homotetramer. The cofactor is Mg(2+).

The protein resides in the cytoplasm. It catalyses the reaction beta-D-fructose 6-phosphate + ATP = beta-D-fructose 1,6-bisphosphate + ADP + H(+). Its pathway is carbohydrate degradation; glycolysis; D-glyceraldehyde 3-phosphate and glycerone phosphate from D-glucose: step 3/4. Allosterically activated by ADP and other diphosphonucleosides, and allosterically inhibited by phosphoenolpyruvate. The binding affinities for these effectors are decreased however, and therefore the allosteric effect becomes apparent only at high effector concentrations. Functionally, catalyzes the phosphorylation of D-fructose 6-phosphate to fructose 1,6-bisphosphate by ATP, the first committing step of glycolysis. The protein is ATP-dependent 6-phosphofructokinase of Lactobacillus delbrueckii subsp. bulgaricus.